Reading from the N-terminus, the 430-residue chain is Histidinol dehydrogenase (430 aa).

NAD(+) is bound by residues Tyr-129, Gln-190, and Asn-213. Residues Ser-236, Gln-258, and His-261 each contribute to the substrate site. Residues Gln-258 and His-261 each coordinate Zn(2+). Active-site proton acceptor residues include Glu-326 and His-327. His-327, Asp-360, Glu-414, and His-419 together coordinate substrate. Zn(2+) is bound at residue Asp-360. His-419 serves as a coordination point for Zn(2+).

This sequence belongs to the histidinol dehydrogenase family. Requires Zn(2+) as cofactor.

The catalysed reaction is L-histidinol + 2 NAD(+) + H2O = L-histidine + 2 NADH + 3 H(+). The protein operates within amino-acid biosynthesis; L-histidine biosynthesis; L-histidine from 5-phospho-alpha-D-ribose 1-diphosphate: step 9/9. In terms of biological role, catalyzes the sequential NAD-dependent oxidations of L-histidinol to L-histidinaldehyde and then to L-histidine. In Gluconobacter oxydans (strain 621H) (Gluconobacter suboxydans), this protein is Histidinol dehydrogenase.